Consider the following 343-residue polypeptide: Tetraacyldisaccharide 4'-kinase (343 aa).

Residue 58–65 (VAGGAGKT) participates in ATP binding.

This sequence belongs to the LpxK family.

The catalysed reaction is a lipid A disaccharide + ATP = a lipid IVA + ADP + H(+). Its pathway is glycolipid biosynthesis; lipid IV(A) biosynthesis; lipid IV(A) from (3R)-3-hydroxytetradecanoyl-[acyl-carrier-protein] and UDP-N-acetyl-alpha-D-glucosamine: step 6/6. Transfers the gamma-phosphate of ATP to the 4'-position of a tetraacyldisaccharide 1-phosphate intermediate (termed DS-1-P) to form tetraacyldisaccharide 1,4'-bis-phosphate (lipid IVA). In Polaromonas naphthalenivorans (strain CJ2), this protein is Tetraacyldisaccharide 4'-kinase.